Consider the following 221-residue polypeptide: ATP-dependent dethiobiotin synthetase BioD (221 aa).

11-16 (DIGKTL) provides a ligand contact to ATP. Threonine 15 is a Mg(2+) binding site. Lysine 35 is a catalytic residue. Threonine 39 contributes to the substrate binding site. Residues aspartate 44 and 103 to 106 (EGAG) contribute to the ATP site. Mg(2+) contacts are provided by aspartate 44 and glutamate 103.

This sequence belongs to the dethiobiotin synthetase family. Homodimer. The cofactor is Mg(2+).

It localises to the cytoplasm. It catalyses the reaction (7R,8S)-7,8-diammoniononanoate + CO2 + ATP = (4R,5S)-dethiobiotin + ADP + phosphate + 3 H(+). It participates in cofactor biosynthesis; biotin biosynthesis; biotin from 7,8-diaminononanoate: step 1/2. In terms of biological role, catalyzes a mechanistically unusual reaction, the ATP-dependent insertion of CO2 between the N7 and N8 nitrogen atoms of 7,8-diaminopelargonic acid (DAPA, also called 7,8-diammoniononanoate) to form a ureido ring. The sequence is that of ATP-dependent dethiobiotin synthetase BioD from Leptospira borgpetersenii serovar Hardjo-bovis (strain L550).